The chain runs to 116 residues: PTS system galactose-specific EIIA component (116 aa).

The PTS EIIA type-3 domain occupies 11–109 (DDYMGVVMGI…AVEVVGQERR (99 aa)). His85 serves as the catalytic Tele-phosphohistidine intermediate. His85 carries the phosphohistidine; by HPr modification. Residue Asp88 participates in Mg(2+) binding.

Homotrimer. Mg(2+) is required as a cofactor.

The phosphoenolpyruvate-dependent sugar phosphotransferase system (sugar PTS), a major carbohydrate active transport system, catalyzes the phosphorylation of incoming sugar substrates concomitantly with their translocation across the cell membrane. Involved in galactose transport with PtcB and Lmg_0963. The polypeptide is PTS system galactose-specific EIIA component (Lactococcus lactis subsp. cremoris (strain MG1363)).